Reading from the N-terminus, the 496-residue chain is MKYEDLRDFIAQLEARGELKRIAAPVDTHLEMTEIADRVLRAGGPALLFEKPVTKGVPQAIPVLANLFGTPQRVAMGMGEDVADGDWSTPLREVGRLLSFLKEPEPPKGLKDAWEKWPVLKQVLNMAPREVRSAPCQQVVWEGDQVDLGKLPIQHCWPGDAAPLITWGLVVTRGPHKKRQNLGIYRQQVIGRNRVIMRWLAHRGGALDFREHQQAHPGEPFPVTVVLGCDPATILGAVTPVPDTISEYQFAGLLRGAKTELVKCLGSDLQVPASSEIVLEGVIHADDMAPEGPYGDHTGYYNEVADFPVFTIERITMRRDPIYHSTYTGKPPDEPAMLGLALNEVFVPLLQKQFPEITDFYLPPEGCSYRLAVVSMKKQYPGHAKRVMFGIWSFLRQFMYTKFIIVVDDDVNIRDWKEVIWAMTTRVDATRDTTLVDNTPIDYLDFASPVAGLGSKMGIDATNKWPGETNREWGRPIVMDAAVKRRVDEIWSTLGL.

Asn-181 provides a ligand contact to Mn(2+). Prenylated FMN contacts are provided by residues 184-186 (IYR), 198-200 (RWL), and 203-204 (RG). Glu-247 contacts Mn(2+). Catalysis depends on Asp-296, which acts as the Proton donor.

The protein belongs to the UbiD family. In terms of assembly, homohexamer. Prenylated FMN serves as cofactor. Mn(2+) is required as a cofactor.

Its subcellular location is the cell membrane. The catalysed reaction is a 4-hydroxy-3-(all-trans-polyprenyl)benzoate + H(+) = a 2-(all-trans-polyprenyl)phenol + CO2. It participates in cofactor biosynthesis; ubiquinone biosynthesis. Functionally, catalyzes the decarboxylation of 3-octaprenyl-4-hydroxy benzoate to 2-octaprenylphenol, an intermediate step in ubiquinone biosynthesis. This chain is 3-octaprenyl-4-hydroxybenzoate carboxy-lyase, found in Azoarcus sp. (strain BH72).